Reading from the N-terminus, the 361-residue chain is Caffeic acid 3-O-methyltransferase 1 (361 aa).

Residue 128–134 coordinates substrate; it reads MNQDKVL. The segment at 160–178 is substrate binding; that stretch reads AFEYHGTDPRFNKVFNQGM. Residues glycine 206, aspartate 229, aspartate 249, methionine 250, and lysine 263 each coordinate S-adenosyl-L-methionine. Histidine 267 acts as the Proton acceptor in catalysis.

Belongs to the class I-like SAM-binding methyltransferase superfamily. Cation-independent O-methyltransferase family. COMT subfamily. Homodimer.

The enzyme catalyses (E)-caffeate + S-adenosyl-L-methionine = (E)-ferulate + S-adenosyl-L-homocysteine + H(+). It functions in the pathway aromatic compound metabolism; phenylpropanoid biosynthesis. In terms of biological role, catalyzes the conversion of caffeic acid to ferulic acid and of 5-hydroxyferulic acid to sinapic acid. The resulting products may subsequently be converted to the corresponding alcohols that are incorporated into lignins. The protein is Caffeic acid 3-O-methyltransferase 1 (COMT1) of Ocimum basilicum (Sweet basil).